The chain runs to 255 residues: 5'-nucleotidase SurE (255 aa).

A divalent metal cation contacts are provided by Asp8, Asp9, Ser39, and Asn95.

Belongs to the SurE nucleotidase family. It depends on a divalent metal cation as a cofactor.

It localises to the cytoplasm. It catalyses the reaction a ribonucleoside 5'-phosphate + H2O = a ribonucleoside + phosphate. Nucleotidase that shows phosphatase activity on nucleoside 5'-monophosphates. The protein is 5'-nucleotidase SurE of Thermosipho melanesiensis (strain DSM 12029 / CIP 104789 / BI429).